The following is a 256-amino-acid chain: Small ribosomal subunit protein eS1A (256 aa).

An N-acetylalanine; partial modification is found at Ala-2.

The protein belongs to the eukaryotic ribosomal protein eS1 family. As to quaternary structure, component of the small ribosomal subunit. Mature ribosomes consist of a small (40S) and a large (60S) subunit. The 40S subunit contains about 33 different proteins and 1 molecule of RNA (18S). The 60S subunit contains about 49 different proteins and 3 molecules of RNA (25S, 5.8S and 5S).

The protein localises to the cytoplasm. This Scheffersomyces stipitis (strain ATCC 58785 / CBS 6054 / NBRC 10063 / NRRL Y-11545) (Yeast) protein is Small ribosomal subunit protein eS1A.